A 499-amino-acid chain; its full sequence is Ribose import ATP-binding protein RbsA (499 aa).

ABC transporter domains are found at residues 3–240 (VEMS…VGRE) and 250–494 (LEPG…TGGD). 35–42 (GENGAGKS) is a binding site for ATP.

It belongs to the ABC transporter superfamily. Ribose importer (TC 3.A.1.2.1) family. As to quaternary structure, the complex is composed of an ATP-binding protein (RbsA), two transmembrane proteins (RbsC) and a solute-binding protein (RbsB).

It is found in the cell membrane. It catalyses the reaction D-ribose(out) + ATP + H2O = D-ribose(in) + ADP + phosphate + H(+). In terms of biological role, part of the ABC transporter complex RbsABC involved in ribose import. Responsible for energy coupling to the transport system. In Shouchella clausii (strain KSM-K16) (Alkalihalobacillus clausii), this protein is Ribose import ATP-binding protein RbsA.